We begin with the raw amino-acid sequence, 321 residues long: MKTAEAQAPAVDAVIFKKEKRKRLLIKLIQQKYLYLMILPGCIYFLLFKYVPMWGIVIAFQDYQPFLGILGSEWVGLKHFIRLFTEPTFFLLLKNTLVLFALNLAIFFPVPILLALLLNEVRIALFKKFVQTLIYIPHFMSWVIVVSLSFVLLTVDGGLINELIVFFGGEKINFLLNEEWFRPLYILQVIWREAGWSTIIYLAAITAVDPQLYEAAKMDGAGRLRQMWHITLPAIKSVIVVLLILKIGDTLELGFEHVYLLLNATNREVAEIFDTYVYTAGLKQGQFSYSTAVGVFKAAVGLILVMLANRLAKKFGEEGIY.

An ABC transmembrane type-1 domain is found at Met1 to Ile144. Helical transmembrane passes span Arg21–Gly41, Tyr63–Leu83, and Ile123–Val143.

The protein belongs to the binding-protein-dependent transport system permease family. As to quaternary structure, the complex is probably composed of two ATP-binding proteins (MsmX), two transmembrane proteins (YtcP and YteP) and a solute-binding protein (YtcQ).

The protein resides in the cell membrane. Functionally, involved in pectin degradation. Part of the ABC transporter complex YtcQP-YteP involved in the uptake of polygalacturonan and rhamnogalacturonan type I. Responsible for the translocation of the substrate across the membrane. The sequence is that of Polygalacturonan/rhamnogalacturonan transport system permease protein YteP (yteP) from Bacillus subtilis (strain 168).